A 782-amino-acid chain; its full sequence is Cyclic nucleotide-gated channel beta-3 (782 aa).

2 disordered regions span residues 1-111 (MFKS…PKSK) and 147-168 (GDIS…PSTQ). Residues 1–213 (MFKSLTIKSN…SIDSYTDRLY (213 aa)) lie on the Cytoplasmic side of the membrane. 2 stretches are compositionally biased toward basic and acidic residues: residues 13–25 (KPRE…KQDP) and 57–73 (EESH…KNSL). 2 stretches are compositionally biased toward polar residues: residues 74–83 (RDLTTNPNHQ) and 152–168 (PEAS…PSTQ). A helical transmembrane segment spans residues 214–237 (LLWLLLVTIAYNWNCWLIPLRLVF). Residues 238-244 (PYQTPDN) are Extracellular-facing. Residues 245–265 (THYWFITDITCDIIYLCDMLL) form a helical membrane-spanning segment. Residues 266–294 (IQPRLQFIKGGDIMVDSNELKRHYRSSTK) are Cytoplasmic-facing. The chain crosses the membrane as a helical span at residues 295–312 (FQLDVASVMPFDVFYLFF). Topologically, residues 313-315 (GFN) are extracellular. The helical transmembrane segment at 316 to 330 (PVFRMNRILKYTSFF) threads the bilayer. Over 331 to 343 (EFNHHLESIMDKA) the chain is Cytoplasmic. The interval 343–442 (AYIYRVIRTT…IGQMQDVIGA (100 aa)) is ion conduction pathway. The helical transmembrane segment at 344–366 (YIYRVIRTTGYLLYTLHINACIY) threads the bilayer. The Extracellular portion of the chain corresponds to 367 to 388 (YWASDYEGIGSTKWVYNGEGNK). 2 helical membrane passes run 389 to 415 (YLRC…SFEI) and 416 to 440 (VFQL…QDVI). Positions 402-405 (TIGG) are selectivity filter. Over 441-782 (GAATANQNNF…TIEVKEKAKQ (342 aa)) the chain is Cytoplasmic. The C-linker stretch occupies residues 445 to 521 (ANQNNFRISM…SIISKVELFK (77 aa)). Residues 525–641 (TQMIYDMLLR…LLMKKASVLL (117 aa)) form a cyclic nucleotide-binding domain region. 3',5'-cyclic GMP-binding residues include G586, E587, R599, and T600. The disordered stretch occupies residues 692 to 724 (EQTIQKTSENSEEGGGKRREYEDKEREPSEKIL). The span at 705-724 (GGGKRREYEDKEREPSEKIL) shows a compositional bias: basic and acidic residues.

The protein belongs to the cyclic nucleotide-gated cation channel (TC 1.A.1.5) family. CNGB3 subfamily. In terms of assembly, forms heterotetrameric channels composed of CNGA3 and CNGB3 subunits with 3:1 stoichiometry.

It is found in the cell membrane. It carries out the reaction Ca(2+)(in) = Ca(2+)(out). It catalyses the reaction Na(+)(in) = Na(+)(out). The catalysed reaction is K(+)(in) = K(+)(out). The enzyme catalyses NH4(+)(in) = NH4(+)(out). It carries out the reaction Rb(+)(in) = Rb(+)(out). It catalyses the reaction Li(+)(in) = Li(+)(out). The catalysed reaction is Cs(+)(in) = Cs(+)(out). Pore-forming subunit of the cone cyclic nucleotide-gated channel. Mediates cone photoresponses at bright light converting transient changes in intracellular cGMP levels into electrical signals. In the dark, cGMP levels are high and keep the channel open enabling a steady inward current carried by Na(+) and Ca(2+) ions that leads to membrane depolarization and neurotransmitter release from synaptic terminals. Upon photon absorption cGMP levels decline leading to channel closure and membrane hyperpolarization that ultimately slows neurotransmitter release and signals the presence of light, the end point of the phototransduction cascade. Conducts cGMP- and cAMP-gated ion currents, with permeability for monovalent and divalent cations. The sequence is that of Cyclic nucleotide-gated channel beta-3 from Canis lupus familiaris (Dog).